The following is a 290-amino-acid chain: Arylamine N-acetyltransferase 2 (290 aa).

The active-site Acyl-thioester intermediate is C68. 2 residues coordinate CoA: S103 and G104. 106-107 (IH) provides a ligand contact to substrate. Active-site residues include H107 and D122. Y208 provides a ligand contact to CoA.

This sequence belongs to the arylamine N-acetyltransferase family.

The protein localises to the cytoplasm. The catalysed reaction is an arylamine + acetyl-CoA = an N-acetylarylamine + CoA. The enzyme catalyses an N-hydroxyarylamine + acetyl-CoA = an N-acetoxyarylamine + CoA. In terms of biological role, catalyzes the N- or O-acetylation of various arylamine and heterocyclic amine substrates, and participates in the detoxification of a plethora of hydrazine and arylamine drugs. This chain is Arylamine N-acetyltransferase 2 (Nat2), found in Mus musculus (Mouse).